The chain runs to 273 residues: Multivesicular body subunit 12A (273 aa).

One can recognise an MABP domain in the interval 9–151 (GMPLAGLAWS…GFAIWCRKAK (143 aa)). Thr130 bears the Phosphothreonine mark. Residues 154-186 (RPVPKPRALSRDVRDLSLDSPGQPSKGGFPERT) form a disordered region. Positions 155 to 160 (PVPKPR) match the SH3-binding motif. 4 positions are modified to phosphoserine: Ser163, Ser170, Ser195, and Ser202. The segment at 192 to 273 (SRASTLRRND…AAARLPPSVS (82 aa)) is interaction with TSG101, VPS37B and VPS28. Residue Tyr204 is modified to Phosphotyrosine. Ser207 carries the phosphoserine modification. In terms of domain architecture, UMA spans 215–265 (MDGVPFTLHPRFEGKSCGPLAFSAFADLTIKSLADIEAEYNYGFVVEKTAA).

This sequence belongs to the MVB12 family. As to quaternary structure, component of the ESCRT-I complex (endosomal sorting complex required for transport I) which consists of TSG101, VPS28, a VPS37 protein (VPS37A to -D) and MVB12A or MVB12B in a 1:1:1:1 stoichiometry. Interacts with CD2AP and CIN85/SH3KBP1. Interacts with CD2AP (via one of the SH3 domains). Interacts with TSG101; the association appears to be mediated by the TSG101-VPS37 binary subcomplex. Interacts with VPS28. Interacts with VPS37B; the association appears to be mediated by the TSG101-VPS37 binary subcomplex. Interacts with VPS37C; the association appears to be mediated by the TSG101-VPS37 binary subcomplex. Interacts with VPS37D; the association appears to be mediated by the TSG101-VPS37 binary subcomplex. Interacts with CEP55. Post-translationally, phosphorylated on Tyr-204 upon EGF stimulation. Phosphorylation is required for interaction with CD2AP and CIN85/SH3KBP1.

It is found in the cytoplasm. The protein resides in the cytoskeleton. The protein localises to the nucleus. It localises to the endosome. Its subcellular location is the microtubule organizing center. It is found in the centrosome. The protein resides in the late endosome membrane. Its function is as follows. Component of the ESCRT-I complex, a regulator of vesicular trafficking process. Required for the sorting of endocytic ubiquitinated cargos into multivesicular bodies. May be involved in the ligand-mediated internalization and down-regulation of EGF receptor. This Bos taurus (Bovine) protein is Multivesicular body subunit 12A (MVB12A).